A 369-amino-acid polypeptide reads, in one-letter code: Chorismate synthase (369 aa).

NADP(+)-binding residues include Arg-48 and Arg-54. FMN is bound by residues 125 to 127, 238 to 239, Gly-278, 293 to 297, and Arg-319; these read RSS, NA, and KPTSS.

Belongs to the chorismate synthase family. In terms of assembly, homotetramer. It depends on FMNH2 as a cofactor.

The catalysed reaction is 5-O-(1-carboxyvinyl)-3-phosphoshikimate = chorismate + phosphate. Its pathway is metabolic intermediate biosynthesis; chorismate biosynthesis; chorismate from D-erythrose 4-phosphate and phosphoenolpyruvate: step 7/7. In terms of biological role, catalyzes the anti-1,4-elimination of the C-3 phosphate and the C-6 proR hydrogen from 5-enolpyruvylshikimate-3-phosphate (EPSP) to yield chorismate, which is the branch point compound that serves as the starting substrate for the three terminal pathways of aromatic amino acid biosynthesis. This reaction introduces a second double bond into the aromatic ring system. This is Chorismate synthase from Burkholderia mallei (strain NCTC 10229).